The primary structure comprises 828 residues: Periplasmic nitrate reductase (828 aa).

Positions 1–31 (MKLSRRSFMKANAVAAAAAAAGLSVPGVARA) form a signal peptide, tat-type signal. One can recognise a 4Fe-4S Mo/W bis-MGD-type domain in the interval 39-95 (IKWDKAPCRFCGTGCGVLVGTQQGRVVACQGDPDAPVNRGLNCIKGYFLPKIMYGKD). Residues Cys46, Cys49, Cys53, and Cys81 each coordinate [4Fe-4S] cluster. Mo-bis(molybdopterin guanine dinucleotide) is bound by residues Lys83, Gln150, Asn175, Cys179, 212-219 (WGSNMAEM), 243-247 (STFQH), 262-264 (QSD), Met372, Gln376, Asn482, 508-509 (SD), Lys531, Asp558, and 718-727 (TGRVLEHWHT). Residue Phe794 participates in substrate binding. Residues Asn802 and Lys819 each contribute to the Mo-bis(molybdopterin guanine dinucleotide) site.

It belongs to the prokaryotic molybdopterin-containing oxidoreductase family. NasA/NapA/NarB subfamily. Component of the periplasmic nitrate reductase NapAB complex composed of NapA and NapB. [4Fe-4S] cluster is required as a cofactor. It depends on Mo-bis(molybdopterin guanine dinucleotide) as a cofactor. In terms of processing, predicted to be exported by the Tat system. The position of the signal peptide cleavage has not been experimentally proven.

It is found in the periplasm. The catalysed reaction is 2 Fe(II)-[cytochrome] + nitrate + 2 H(+) = 2 Fe(III)-[cytochrome] + nitrite + H2O. Its function is as follows. Catalytic subunit of the periplasmic nitrate reductase complex NapAB. Receives electrons from NapB and catalyzes the reduction of nitrate to nitrite. The protein is Periplasmic nitrate reductase of Salmonella paratyphi A (strain ATCC 9150 / SARB42).